Reading from the N-terminus, the 243-residue chain is Aliphatic sulfonates import ATP-binding protein SsuB (243 aa).

The region spanning Ala11 to Thr230 is the ABC transporter domain. Residue Gly43–Ser50 coordinates ATP.

The protein belongs to the ABC transporter superfamily. Aliphatic sulfonates importer (TC 3.A.1.17.2) family. As to quaternary structure, the complex is composed of two ATP-binding proteins (SsuB), two transmembrane proteins (SsuC) and a solute-binding protein (SsuA).

The protein localises to the cell membrane. It catalyses the reaction ATP + H2O + aliphatic sulfonate-[sulfonate-binding protein]Side 1 = ADP + phosphate + aliphatic sulfonateSide 2 + [sulfonate-binding protein]Side 1.. Part of the ABC transporter complex SsuABC involved in aliphatic sulfonates import. Responsible for energy coupling to the transport system. Is also involved in taurine transport. Seems to not be involved in long chain aliphatic sulfonates transport (chain length of eight carbon atoms or more). The polypeptide is Aliphatic sulfonates import ATP-binding protein SsuB (Corynebacterium glutamicum (strain ATCC 13032 / DSM 20300 / JCM 1318 / BCRC 11384 / CCUG 27702 / LMG 3730 / NBRC 12168 / NCIMB 10025 / NRRL B-2784 / 534)).